The following is a 206-amino-acid chain: N-(5'-phosphoribosyl)anthranilate isomerase (206 aa).

It belongs to the TrpF family.

It catalyses the reaction N-(5-phospho-beta-D-ribosyl)anthranilate = 1-(2-carboxyphenylamino)-1-deoxy-D-ribulose 5-phosphate. It functions in the pathway amino-acid biosynthesis; L-tryptophan biosynthesis; L-tryptophan from chorismate: step 3/5. This Chlamydia felis (strain Fe/C-56) (Chlamydophila felis) protein is N-(5'-phosphoribosyl)anthranilate isomerase.